Here is a 259-residue protein sequence, read N- to C-terminus: MTLSLPQQGRLRAAVECRRITRRFAGQAVLDGLDLDIAPGEFVALLGSSGSGKTTLLRTLAGLEPIDQGQLQVPSAMAAVFQEPRLMPWKRVWRNVALGVRGAGARERAEAALEEVGLAHRLNAWPGTLSGGEAQRVALARALVREPHLLLLDEPFAALDALTRIRMHQLIIRLWRVHTPAVLLVTHDVDEALLLADRVLVLANGQIAEQLPIRLPRPRQASTPGFQALRARLLQLLGVETEAEPAVDISLPLSRTASR.

Positions 15 to 229 (VECRRITRRF…QASTPGFQAL (215 aa)) constitute an ABC transporter domain. 47 to 54 (GSSGSGKT) contributes to the ATP binding site.

It belongs to the ABC transporter superfamily. Aliphatic sulfonates importer (TC 3.A.1.17.2) family. In terms of assembly, the complex is composed of two ATP-binding proteins (SsuB), two transmembrane proteins (SsuC) and a solute-binding protein (SsuA).

The protein resides in the cell inner membrane. It catalyses the reaction ATP + H2O + aliphatic sulfonate-[sulfonate-binding protein]Side 1 = ADP + phosphate + aliphatic sulfonateSide 2 + [sulfonate-binding protein]Side 1.. In terms of biological role, part of the ABC transporter complex SsuABC involved in aliphatic sulfonates import. Responsible for energy coupling to the transport system. The protein is Aliphatic sulfonates import ATP-binding protein SsuB 1 of Pseudomonas fluorescens (strain ATCC BAA-477 / NRRL B-23932 / Pf-5).